The following is a 1340-amino-acid chain: Pleckstrin homology domain-containing family G member 2 (1340 aa).

Residues 34–44 (TPTAQAATTMA) are compositionally biased toward polar residues. The interval 34–76 (TPTAQAATTMASPRGSGSSTSLSTVGSEGDPSPACSASRPEPL) is disordered. Over residues 45-62 (SPRGSGSSTSLSTVGSEG) the composition is skewed to low complexity. Residues 98-279 (RLERVAREIV…TAVAWYINDM (182 aa)) form the DH domain. The PH domain maps to 309 to 407 (ELVLEGTFRG…WIHCLQRLFF (99 aa)). Disordered stretches follow at residues 431-623 (PKSK…IPCI), 684-743 (LPGP…SVQG), 820-855 (MQRAETRASTNAPRRRPRVLAQPQPSPCPPQEEAEP), 907-979 (NVSD…PSAG), 991-1028 (TTSLPGQECQADTVALSKQEGHEDSQNPNKAPGAEQRD), 1047-1069 (PVCTSSPDQQIPATTPLPLSTDF), and 1125-1146 (PLSSHKQEDAPECLGPEPSLTD). At T441 the chain carries Phosphothreonine. S446 and S465 each carry phosphoserine. Basic and acidic residues predominate over residues 560–572 (DIPKFPRDSRVPV). Positions 588 to 600 (SEEEEEEDLETDE) are enriched in acidic residues. 5 stretches are compositionally biased toward polar residues: residues 703–714 (SGSNPGRLSESP), 820–831 (MQRAETRASTNA), 907–921 (NVSDLSKQGHLSSNS), 930–945 (GQSNFQNIQVPSTSLL), and 956–972 (PTASTLPDTSQLQSQVP). Residues 1049-1059 (CTSSPDQQIPA) show a composition bias toward polar residues. Residue T1215 is modified to Phosphothreonine. Phosphoserine is present on residues S1219 and S1269. The tract at residues 1250–1340 (RRQGPGGEGT…VGPSQGPGGS (91 aa)) is disordered. Residues 1276–1288 (PSPPPQPQPPAPP) are compositionally biased toward pro residues. The span at 1319–1333 (HPALLAAPHPGAVGP) shows a compositional bias: low complexity.

As to expression, expressed in thymus, skeletal muscle, lung, testis, uterus, pancreas and heart and also expressed during embryogenesis.

Its function is as follows. May be a transforming oncogene with exchange activity for CDC42. May be a guanine-nucleotide exchange factor (GEF) for RAC1 and CDC42. Activated by the binding to subunits beta and gamma of the heterotrimeric guanine nucleotide-binding protein (G protein). Involved in the regulation of actin polymerization. The polypeptide is Pleckstrin homology domain-containing family G member 2 (Plekhg2) (Mus musculus (Mouse)).